The sequence spans 391 residues: S-adenosylmethionine synthase (391 aa).

An ATP-binding site is contributed by H19. D21 provides a ligand contact to Mg(2+). E47 is a K(+) binding site. 2 residues coordinate L-methionine: E60 and Q103. A flexible loop region spans residues 103 to 113; that stretch reads QSPDIAQGVDR. ATP is bound by residues 168 to 170, 236 to 237, D245, 251 to 252, A268, and K272; these read DGK, RF, and RK. D245 serves as a coordination point for L-methionine. Residue K276 coordinates L-methionine.

This sequence belongs to the AdoMet synthase family. As to quaternary structure, homotetramer; dimer of dimers. Mg(2+) is required as a cofactor. K(+) serves as cofactor.

It is found in the cytoplasm. It carries out the reaction L-methionine + ATP + H2O = S-adenosyl-L-methionine + phosphate + diphosphate. Its pathway is amino-acid biosynthesis; S-adenosyl-L-methionine biosynthesis; S-adenosyl-L-methionine from L-methionine: step 1/1. Functionally, catalyzes the formation of S-adenosylmethionine (AdoMet) from methionine and ATP. The overall synthetic reaction is composed of two sequential steps, AdoMet formation and the subsequent tripolyphosphate hydrolysis which occurs prior to release of AdoMet from the enzyme. In Oleidesulfovibrio alaskensis (strain ATCC BAA-1058 / DSM 17464 / G20) (Desulfovibrio alaskensis), this protein is S-adenosylmethionine synthase.